We begin with the raw amino-acid sequence, 1264 residues long: P-type sodium-transporting ATPase4 (1264 aa).

Residues 1–12 (MSSQNNNKQGGQ) are compositionally biased toward polar residues. A disordered region spans residues 1–102 (MSSQNNNKQG…INGEKNDDNN (102 aa)). Composition is skewed to basic and acidic residues over residues 15-42 (NNKKDSDDIKPSVSKEDLINSLKNDELN) and 50-64 (NDMKKNENMNIKKNE). 8 consecutive transmembrane segments (helical) span residues 165–185 (VWLIFLSQYCSPVVLLLLVAA), 186–206 (VASLALNEVVEGVAIISIVTL), 359–379 (GLIGLIAIIVLVVIISLAVII), 393–413 (FVIIIIGVGFAVSSIPEGLPM), 923–943 (FVCFLLGTNIGEIIYLSVAIV), 1006–1026 (IFEALCVLLSLAFSLYICTGF), 1203–1223 (CSISATLTFLSTCIPGITSIL), and 1226–1246 (TCLLWWQYLLAIFWALLNLFL).

It belongs to the cation transport ATPase (P-type) (TC 3.A.3) family.

It is found in the cell membrane. It carries out the reaction Na(+)(in) + ATP + H2O = Na(+)(out) + ADP + phosphate + H(+). Its activity is regulated as follows. Inhibited by cipargamin and other spiroindolone compounds. Inhibited by 4-cyano-3-methylisoquinoline derivatives MB14 and MB10 but not RK18. Inhibited by (+)-SJ733, a dihydroisoquinolone compound. Sodium-exporting ATPase. Required for the extrusion of Na(+) from the intraerythrocytic parasites to maintain a low cytosolic concentration of Na(+). The protein is P-type sodium-transporting ATPase4 of Plasmodium falciparum (isolate 3D7).